The sequence spans 169 residues: MYTSGYAHRSSSFSSAASKIARVSTENTTAGLISEVVYREDQPMMTQLLLLPLLQQLGQQSRWQLWLTPQQKLSREWVQASGLPLTKVMQISQLSPCHTVESMVRALRTGNYSVVIGWLADDLTEEEHAELVDAANEGNAMGFIMRPVSASSHATRQLSGLKIHSNLYH.

The ftsZ binding stretch occupies residues 106–112; sequence ALRTGNY. The lon protease binding stretch occupies residues 162–169; the sequence is KIHSNLYH.

Belongs to the SulA family. As to quaternary structure, interacts with FtsZ. Is rapidly cleaved and degraded by the Lon protease once DNA damage is repaired.

In terms of biological role, component of the SOS system and an inhibitor of cell division. Accumulation of SulA causes rapid cessation of cell division and the appearance of long, non-septate filaments. In the presence of GTP, binds a polymerization-competent form of FtsZ in a 1:1 ratio, thus inhibiting FtsZ polymerization and therefore preventing it from participating in the assembly of the Z ring. This mechanism prevents the premature segregation of damaged DNA to daughter cells during cell division. This is Cell division inhibitor SulA from Shigella boydii serotype 18 (strain CDC 3083-94 / BS512).